The sequence spans 235 residues: Transmembrane emp24 domain-containing protein 9 (235 aa).

A signal peptide spans 1-37; sequence MAVELGVLLVRPRPGTGLGRVMRTLLLVLWLATRGSA. Over 38 to 202 the chain is Lumenal; the sequence is LYFHIGETEK…RQTSESTNQR (165 aa). The GOLD domain occupies 47 to 145; that stretch reads KKCFIEEIPD…MLRVHLDIQV (99 aa). Residues 121 to 160 are required for interaction with STX17; that stretch reads CLHSNSTKFSLFAGGMLRVHLDIQVGEHANDYAEIAAKDK. Residue Asn-125 is glycosylated (N-linked (GlcNAc...) asparagine). A coiled-coil region spans residues 154-184; the sequence is EIAAKDKLSELQLRVRQLVEQVEQIQKEQNY. Lys-160 is subject to N6-acetyllysine. A helical transmembrane segment spans residues 203 to 222; that stretch reads VLWWSILQTLILVAIGVWQM. The Cytoplasmic portion of the chain corresponds to 223 to 235; sequence RHLKSFFEAKKLV. The COPII vesicle coat-binding motif lies at 228–229; that stretch reads FF. The COPI vesicle coat-binding motif lies at 228 to 235; sequence FFEAKKLV.

Belongs to the EMP24/GP25L family. In terms of assembly, monomer and homodimer in endoplasmic reticulum. Predominantly monomeric and to lesser extent homodimeric in endoplasmic reticulum-Golgi intermediate compartment and cis-Golgi network. Probably oligomerizes with other members of the EMP24/GP25L family such as TMED2, TMED7 and TMED10. Interacts with TMED5. Interacts (via C-terminus) with COPG1; the interaction involves dimeric TMED9. Interacts with PTPN2 and SPAST. Interacts with STX17; the interaction is direct. In terms of processing, N-linked glycosylated containing high mannose.

The protein resides in the endoplasmic reticulum membrane. It localises to the golgi apparatus. Its subcellular location is the cis-Golgi network membrane. It is found in the endoplasmic reticulum-Golgi intermediate compartment membrane. The protein localises to the trans-Golgi network membrane. Its function is as follows. Appears to be involved in vesicular protein trafficking, mainly in the early secretory pathway. In COPI vesicle-mediated retrograde transport involved in the coatomer recruitment to membranes of the early secretory pathway. Increases coatomer-dependent activity of ARFGAP2. Thought to play a crucial role in the specific retention of p24 complexes in cis-Golgi membranes; specifically contributes to the coupled localization of TMED2 and TMED10 in the cis-Golgi network. May be involved in organization of intracellular membranes, such as of the ER-Golgi intermediate compartment and the Golgi apparatus. Involved in ER localization of PTPN2 isoform PTPB. The sequence is that of Transmembrane emp24 domain-containing protein 9 (TMED9) from Homo sapiens (Human).